Consider the following 339-residue polypeptide: Glyceraldehyde-3-phosphate dehydrogenase (339 aa).

NAD(+)-binding positions include 13–14 (RI), Asp-35, and Lys-84. Residues 156–158 (SCT), Thr-187, 216–217 (TG), and Arg-239 each bind D-glyceraldehyde 3-phosphate. The active-site Nucleophile is Cys-157. Asn-321 lines the NAD(+) pocket.

This sequence belongs to the glyceraldehyde-3-phosphate dehydrogenase family. In terms of assembly, homotetramer.

It is found in the cytoplasm. It carries out the reaction D-glyceraldehyde 3-phosphate + phosphate + NAD(+) = (2R)-3-phospho-glyceroyl phosphate + NADH + H(+). It functions in the pathway carbohydrate degradation; glycolysis; pyruvate from D-glyceraldehyde 3-phosphate: step 1/5. The protein is Glyceraldehyde-3-phosphate dehydrogenase of Onchocerca volvulus.